The sequence spans 496 residues: MSTEHFEELNDQQIVRREKMTALAEQGIDPFGKRFERSANSAELKAQYEDKSKEDLEELGQTAIIAGRIMTKRGKGKAGFAHIQDREGQIQIYVRKDDVSEENYEIFKKADLGDFIGVEGDVFKTNVGELSIHARKLTHLSKALRPLPEKFHGLTDIETRYRKRYLDLITNRESFDRFVTRSKIISEIRRYLDGLGFLEVETPVLHNEAGGAAARPFITHHNAQNIDMVLRIATELHLKRLIVGGMERVYEIGRIFRNEGMDATHNPEFTSIEVYQAYADYQDIMDLTEGIIQHTAKAVVGDGPVTYQGTEIAIHEPFKRIHMVDAIKEQTGVDFWQEMSFEEAKALAAEHKVPVEKHHTEVGQIINSFFEEYVEATLIQPTFVYGHPVAVSPLAKKNDEDPRFTDRFELFIMTKEYGNAFTELNDPIDQLERFEAQAKAKELGDDEATGVDYDYIEALEYGMPPTGGLGIGIDRLCMLLTDTTTIRDVLLFPTMK.

Mg(2+) is bound by residues E409 and E416.

The protein belongs to the class-II aminoacyl-tRNA synthetase family. Homodimer. Mg(2+) is required as a cofactor.

The protein localises to the cytoplasm. The enzyme catalyses tRNA(Lys) + L-lysine + ATP = L-lysyl-tRNA(Lys) + AMP + diphosphate. The sequence is that of Lysine--tRNA ligase from Streptococcus suis (strain 05ZYH33).